A 353-amino-acid chain; its full sequence is Photosystem II D2 protein (353 aa).

The residue at position 2 (Thr-2) is an N-acetylthreonine. Residue Thr-2 is modified to Phosphothreonine. Residues 41–61 (CAYFALGGWFTGTTFVTSWYT) traverse the membrane as a helical segment. His-118 serves as a coordination point for chlorophyll a. Residues 125 to 141 (GFMLRQFELARSVQLRP) traverse the membrane as a helical segment. Pheophytin a contacts are provided by Gln-130 and Asn-143. A helical membrane pass occupies residues 153-166 (VFVSVFLIYPLGQS). His-198 contacts chlorophyll a. Residues 208-228 (AALLCAIHGATVENTLFEDGD) traverse the membrane as a helical segment. A plastoquinone-binding residues include His-215 and Phe-262. His-215 contributes to the Fe cation binding site. His-269 contributes to the Fe cation binding site. The chain crosses the membrane as a helical span at residues 279-295 (GLWMSAIGVVGLALNLR).

Belongs to the reaction center PufL/M/PsbA/D family. As to quaternary structure, PSII is composed of 1 copy each of membrane proteins PsbA, PsbB, PsbC, PsbD, PsbE, PsbF, PsbH, PsbI, PsbJ, PsbK, PsbL, PsbM, PsbT, PsbX, PsbY, PsbZ, Psb30/Ycf12, at least 3 peripheral proteins of the oxygen-evolving complex and a large number of cofactors. It forms dimeric complexes. It depends on The D1/D2 heterodimer binds P680, chlorophylls that are the primary electron donor of PSII, and subsequent electron acceptors. It shares a non-heme iron and each subunit binds pheophytin, quinone, additional chlorophylls, carotenoids and lipids. There is also a Cl(-1) ion associated with D1 and D2, which is required for oxygen evolution. The PSII complex binds additional chlorophylls, carotenoids and specific lipids. as a cofactor.

The protein resides in the plastid. Its subcellular location is the chloroplast thylakoid membrane. The catalysed reaction is 2 a plastoquinone + 4 hnu + 2 H2O = 2 a plastoquinol + O2. In terms of biological role, photosystem II (PSII) is a light-driven water:plastoquinone oxidoreductase that uses light energy to abstract electrons from H(2)O, generating O(2) and a proton gradient subsequently used for ATP formation. It consists of a core antenna complex that captures photons, and an electron transfer chain that converts photonic excitation into a charge separation. The D1/D2 (PsbA/PsbD) reaction center heterodimer binds P680, the primary electron donor of PSII as well as several subsequent electron acceptors. D2 is needed for assembly of a stable PSII complex. The protein is Photosystem II D2 protein of Agrostis stolonifera (Creeping bentgrass).